The following is a 208-amino-acid chain: Ras-related protein Rab-6B (208 aa).

GTP-binding positions include 20–27, threonine 45, 68–72, and 126–129; these read GEQSVGKT, DTAGQ, and NKTD. An Effector region motif is present at residues 42 to 50; sequence YQATIGIDF. 2 S-geranylgeranyl cysteine lipidation sites follow: cysteine 206 and cysteine 208. Residue cysteine 208 is modified to Cysteine methyl ester.

It belongs to the small GTPase superfamily. Rab family. In terms of assembly, interacts (GTP-bound) with BICD1 (via C-terminus); the interaction is direct. Interacts (GDP-bound) with DYNLRB1. Interacts (GTP-bound) with APBA1/MINT1. Interacts (GTP-bound) with VPS13B.

The protein localises to the golgi apparatus membrane. The protein resides in the endoplasmic reticulum-Golgi intermediate compartment. It localises to the cytoplasmic vesicle. The catalysed reaction is GTP + H2O = GDP + phosphate + H(+). Its activity is regulated as follows. Regulated by guanine nucleotide exchange factors (GEFs) which promote the exchange of bound GDP for free GTP, GTPase activating proteins (GAPs) which increase the GTP hydrolysis activity, and GDP dissociation inhibitors which inhibit the dissociation of the nucleotide from the GTPase. In terms of biological role, the small GTPases Rab are key regulators of intracellular membrane trafficking, from the formation of transport vesicles to their fusion with membranes. Rabs cycle between active GTP-bound and inactive GDP-bound states. In their active state, drive transport of vesicular carriers from donor organelles to acceptor organelles to regulate the membrane traffic that maintains organelle identity and morphology. Recruits VPS13B to the Golgi membrane. Regulates the compacted morphology of the Golgi. Seems to have a role in retrograde membrane traffic at the level of the Golgi complex. May function in retrograde transport in neuronal cells. Plays a role in neuron projection development. The chain is Ras-related protein Rab-6B (RAB6B) from Bos taurus (Bovine).